We begin with the raw amino-acid sequence, 373 residues long: MSEKKINLLDLDRKAMRALFADMGEKPFRADQLMKWLYHFGVSDFEEMTNINKVLRQKLAARCEIVAPEISSFQKSTDGTIKFAINVGQGQEVETVYIPEDDRATLCVSSQVGCALECTFCSTGQQGFNRNLTVSEIVGQIWRVSHFLGFAKDTGERPITNVVMMGMGEPLLNLANVIPAMDIMLDDFGFSLSKRRVTLSTSGVVPALDKLGDAIDVALAVSIHAPNDELRDILVPINKKYPLDEFLAGIRRYIAKSNANRGRVTVEYVMLDHINDSTDQAHELAKLMKDTPCKVNLIPFNPYPGSPYGRSSNSRIDRFSKVLMEYGFTVIVRKTRGDDIDAACGQLAGDIRDRTKRLAKKRMQENQISVTMN.

The Proton acceptor role is filled by glutamate 94. Residues 100-339 form the Radical SAM core domain; that stretch reads EDDRATLCVS…VIVRKTRGDD (240 aa). Cysteine 107 and cysteine 344 are joined by a disulfide. [4Fe-4S] cluster is bound by residues cysteine 114, cysteine 118, and cysteine 121. S-adenosyl-L-methionine is bound by residues 168–169, serine 200, 222–224, and asparagine 301; these read GE and SIH. Residue cysteine 344 is the S-methylcysteine intermediate of the active site.

This sequence belongs to the radical SAM superfamily. RlmN family. [4Fe-4S] cluster serves as cofactor.

Its subcellular location is the cytoplasm. The catalysed reaction is adenosine(2503) in 23S rRNA + 2 reduced [2Fe-2S]-[ferredoxin] + 2 S-adenosyl-L-methionine = 2-methyladenosine(2503) in 23S rRNA + 5'-deoxyadenosine + L-methionine + 2 oxidized [2Fe-2S]-[ferredoxin] + S-adenosyl-L-homocysteine. It catalyses the reaction adenosine(37) in tRNA + 2 reduced [2Fe-2S]-[ferredoxin] + 2 S-adenosyl-L-methionine = 2-methyladenosine(37) in tRNA + 5'-deoxyadenosine + L-methionine + 2 oxidized [2Fe-2S]-[ferredoxin] + S-adenosyl-L-homocysteine. Specifically methylates position 2 of adenine 2503 in 23S rRNA and position 2 of adenine 37 in tRNAs. m2A2503 modification seems to play a crucial role in the proofreading step occurring at the peptidyl transferase center and thus would serve to optimize ribosomal fidelity. This is Dual-specificity RNA methyltransferase RlmN from Shewanella baltica (strain OS223).